The sequence spans 38 residues: Photosystem II reaction center protein L (38 aa).

The chain crosses the membrane as a helical span at residues 17–37 (SLYWGLLLIXVLAVLFSNYFF).

The protein belongs to the PsbL family. PSII is composed of 1 copy each of membrane proteins PsbA, PsbB, PsbC, PsbD, PsbE, PsbF, PsbH, PsbI, PsbJ, PsbK, PsbL, PsbM, PsbT, PsbX, PsbY, PsbZ, Psb30/Ycf12, at least 3 peripheral proteins of the oxygen-evolving complex and a large number of cofactors. It forms dimeric complexes.

It localises to the plastid. The protein resides in the chloroplast thylakoid membrane. In terms of biological role, one of the components of the core complex of photosystem II (PSII). PSII is a light-driven water:plastoquinone oxidoreductase that uses light energy to abstract electrons from H(2)O, generating O(2) and a proton gradient subsequently used for ATP formation. It consists of a core antenna complex that captures photons, and an electron transfer chain that converts photonic excitation into a charge separation. This subunit is found at the monomer-monomer interface and is required for correct PSII assembly and/or dimerization. The sequence is that of Photosystem II reaction center protein L from Allium textile (Textile onion).